Consider the following 490-residue polypeptide: Cysteine--tRNA ligase (490 aa).

Zn(2+) is bound at residue Cys43. Residues 45-55 (MTVQSSPHLGH) carry the 'HIGH' region motif. The disordered stretch occupies residues 177 to 204 (VDEMSPAEDSDPRGKRDPRDFALWKGHK). A compositionally biased stretch (basic and acidic residues) spans 186–204 (SDPRGKRDPRDFALWKGHK). Zn(2+)-binding residues include Cys228, His253, and Glu257. The 'KMSKS' region signature appears at 284–288 (KMSKS). Lys287 is an ATP binding site.

The protein belongs to the class-I aminoacyl-tRNA synthetase family. Monomer. The cofactor is Zn(2+).

It localises to the cytoplasm. The enzyme catalyses tRNA(Cys) + L-cysteine + ATP = L-cysteinyl-tRNA(Cys) + AMP + diphosphate. The chain is Cysteine--tRNA ligase from Cutibacterium acnes (strain DSM 16379 / KPA171202) (Propionibacterium acnes).